The following is a 33-amino-acid chain: Potassium channel toxin alpha-KTx 10.5 (33 aa).

Cystine bridges form between cysteine 4-cysteine 23, cysteine 9-cysteine 28, and cysteine 13-cysteine 30.

As to expression, expressed by the venom gland.

The protein resides in the secreted. Functionally, inhibits less than 5% of human voltage-gated potassium (Kv) channel Kv1.3/KCNA3 currents at 100nM concentration and does not block human Kv1.1/KCNA1 and Kv1.2/KCNA2 currents. This is Potassium channel toxin alpha-KTx 10.5 from Centruroides bonito (Scorpion).